Consider the following 314-residue polypeptide: MEDKRNIQIIEWEHLDKKKFYVFGVAMTMMIRVSVYPFTLIRTRLQVQKGKSLYHGTFDAFVKILRADGVAGLYRGFLVNTFTLISGQCYVTTYELTRKFVADYSQSNTVKSLVAGGSASLVAQSITVPIDVVSQHLMMQRKGEKMGRFQVHGNLEGQGVIAFGQTKDIIRQILRADGLRGFYRGYVASLLTYIPNSAVWWPFYHFYAEQLSRLCPQECPHIVFQAISGPLAAATASILTNPMDVIRTRVQVEGKSSIVLTFRQLMAEEGPWGLMKGLSARIISATPSTIVIVVGYESLKKLSLRPELVDSRHW.

3 Solcar repeats span residues 18-100 (KKFY…TRKF), 107-210 (SNTV…YAEQ), and 220-302 (PHIV…LKKL). Helical transmembrane passes span 20 to 42 (FYVF…TLIR), 71 to 90 (AGLY…GQCY), 113 to 133 (LVAG…IDVV), 185 to 201 (GYVA…AVWW), 222 to 239 (IVFQ…ASIL), and 278 to 296 (LSAR…VVGY).

It belongs to the mitochondrial carrier (TC 2.A.29) family. As to expression, highly expressed in brown adipose tissues compared with other metabolic organs.

The protein resides in the mitochondrion membrane. It catalyses the reaction L-valine(in) = L-valine(out). It carries out the reaction L-leucine(in) = L-leucine(out). Its function is as follows. Mitochondrial solute transporter which transports branched-chain amino acid (BCAA; valine, leucine and isoleucine) into mitochondria in brown adipose tissue (BAT). BAT is involved in BCAA catabolism and actively utilizes BCAA in the mitochondria for thermogenesis. This Mus musculus (Mouse) protein is Solute carrier family 25 member 44.